Here is a 402-residue protein sequence, read N- to C-terminus: Argininosuccinate synthase (402 aa).

An ATP-binding site is contributed by 7–15; that stretch reads LYSGGLDTS. Residue Tyr83 coordinates L-citrulline. Gly113 is a binding site for ATP. Positions 115, 119, and 120 each coordinate L-aspartate. Asn119 is a binding site for L-citrulline. L-citrulline contacts are provided by Arg123, Ser169, Ser178, Glu253, and Tyr265.

It belongs to the argininosuccinate synthase family. Type 1 subfamily. Homotetramer.

The protein localises to the cytoplasm. It catalyses the reaction L-citrulline + L-aspartate + ATP = 2-(N(omega)-L-arginino)succinate + AMP + diphosphate + H(+). The protein operates within amino-acid biosynthesis; L-arginine biosynthesis; L-arginine from L-ornithine and carbamoyl phosphate: step 2/3. The polypeptide is Argininosuccinate synthase (Thermoplasma acidophilum (strain ATCC 25905 / DSM 1728 / JCM 9062 / NBRC 15155 / AMRC-C165)).